Consider the following 336-residue polypeptide: Probable G-protein coupled receptor 160 (336 aa).

At 1–20 (MTALSSKNCSLQYQLHQSPQ) the chain is on the extracellular side. Asn8 carries N-linked (GlcNAc...) asparagine glycosylation. The chain crosses the membrane as a helical span at residues 21 to 41 (LLEASCLLFLIILGKVLLNIL). The Cytoplasmic segment spans residues 42–56 (LLRVRRGDARWTLME). A helical transmembrane segment spans residues 57–77 (YFCFSLALVDLLLLVNISILT). At 78–95 (YFRDFVVLGIRFTRYHIC) the chain is on the extracellular side. The helical transmembrane segment at 96–116 (LLTQIISFTYGFLHYPVCSLA) threads the bilayer. Topologically, residues 117–136 (CIDYWCNLSRASKQSSRWQK) are cytoplasmic. The chain crosses the membrane as a helical span at residues 137–157 (LLYFLTVILTWISVLAYVLVD). The Extracellular segment spans residues 158 to 186 (PAISVSLKAHRGYVYQCPAYVSTQSHWLS). Residues 187-207 (LSMLMVLFVAFLISWQEVVAL) form a helical membrane-spanning segment. Over 208 to 243 (LQAMRIASYKSKAALYFPFPLHCGYALSCREALLPR) the chain is Cytoplasmic. A helical membrane pass occupies residues 244–264 (LIVCFLGTWFPFVALQVLILS). Over 265-272 (LRVQIPAY) the chain is Extracellular. A helical membrane pass occupies residues 273–293 (IEMNVPWLYFVNSFLIAAVYW). At 294-336 (FNCHKLDLRDSSLPVDPFINWKCCFVPVHRLKQVERPMSIVIC) the chain is on the cytoplasmic side.

Belongs to the G-protein coupled receptor 1 family.

It localises to the cell membrane. Orphan receptor. This Mus musculus (Mouse) protein is Probable G-protein coupled receptor 160 (Gpr160).